We begin with the raw amino-acid sequence, 337 residues long: MRPYPIKFVSIVIPVYNERQSLPELLRRTEAACKHLNHRFEIVLVDDGSRDDSAEILQQAAERSASPFVAVILNRNYGQHAAIMAGFEQCKGDVVITLDADLQNPPEEIPRLVALAEQGYDVVGTVRSNRQDSAWRRWPSKIINVAVQRSTGVAMSDYGCMLRAYRRTIVDAMLACRERSTFIPILANSFARHTTEVLVDHAEREHGDSKYSPMRLVNLMFDLITCMTTTPLRLLSIIGFSMALLGVLFAALLIILRLIFGAPWAGDGTFVLFAVLFVFTGGQFIGMGLLGEYLGRMYSDVRARPRFFIEKVVRSSSEVVSESVDSSVTPYMNKVAP.

A run of 2 helical transmembrane segments spans residues 235–255 (LSII…LLII) and 270–290 (FVLF…MGLL).

Belongs to the glycosyltransferase 2 family.

The protein localises to the cell inner membrane. It catalyses the reaction UDP-4-deoxy-4-formamido-beta-L-arabinose + di-trans,octa-cis-undecaprenyl phosphate = 4-deoxy-4-formamido-alpha-L-arabinopyranosyl di-trans,octa-cis-undecaprenyl phosphate + UDP. It participates in glycolipid biosynthesis; 4-amino-4-deoxy-alpha-L-arabinose undecaprenyl phosphate biosynthesis; 4-amino-4-deoxy-alpha-L-arabinose undecaprenyl phosphate from UDP-4-deoxy-4-formamido-beta-L-arabinose and undecaprenyl phosphate: step 1/2. The protein operates within bacterial outer membrane biogenesis; lipopolysaccharide biosynthesis. Functionally, catalyzes the transfer of 4-deoxy-4-formamido-L-arabinose from UDP to undecaprenyl phosphate. The modified arabinose is attached to lipid A and is required for resistance to polymyxin and cationic antimicrobial peptides. In Pseudomonas savastanoi pv. phaseolicola (strain 1448A / Race 6) (Pseudomonas syringae pv. phaseolicola (strain 1448A / Race 6)), this protein is Undecaprenyl-phosphate 4-deoxy-4-formamido-L-arabinose transferase.